The following is a 367-amino-acid chain: Queuine tRNA-ribosyltransferase (367 aa).

The active-site Proton acceptor is Asp-92. Substrate is bound by residues 92-96 (DSGGF), Asp-146, Gln-188, and Gly-215. The interval 246-252 (GVGTPKD) is RNA binding. Asp-265 acts as the Nucleophile in catalysis. Zn(2+)-binding residues include Cys-303, Cys-305, Cys-308, and His-334.

This sequence belongs to the queuine tRNA-ribosyltransferase family. Homodimer. Within each dimer, one monomer is responsible for RNA recognition and catalysis, while the other monomer binds to the replacement base PreQ1. Zn(2+) is required as a cofactor.

The catalysed reaction is 7-aminomethyl-7-carbaguanine + guanosine(34) in tRNA = 7-aminomethyl-7-carbaguanosine(34) in tRNA + guanine. The protein operates within tRNA modification; tRNA-queuosine biosynthesis. Catalyzes the base-exchange of a guanine (G) residue with the queuine precursor 7-aminomethyl-7-deazaguanine (PreQ1) at position 34 (anticodon wobble position) in tRNAs with GU(N) anticodons (tRNA-Asp, -Asn, -His and -Tyr). Catalysis occurs through a double-displacement mechanism. The nucleophile active site attacks the C1' of nucleotide 34 to detach the guanine base from the RNA, forming a covalent enzyme-RNA intermediate. The proton acceptor active site deprotonates the incoming PreQ1, allowing a nucleophilic attack on the C1' of the ribose to form the product. After dissociation, two additional enzymatic reactions on the tRNA convert PreQ1 to queuine (Q), resulting in the hypermodified nucleoside queuosine (7-(((4,5-cis-dihydroxy-2-cyclopenten-1-yl)amino)methyl)-7-deazaguanosine). The protein is Queuine tRNA-ribosyltransferase of Francisella tularensis subsp. holarctica (strain FTNF002-00 / FTA).